Here is a 247-residue protein sequence, read N- to C-terminus: UPF0246 protein LSEI_2080 (247 aa).

The protein belongs to the UPF0246 family.

This Lacticaseibacillus paracasei (strain ATCC 334 / BCRC 17002 / CCUG 31169 / CIP 107868 / KCTC 3260 / NRRL B-441) (Lactobacillus paracasei) protein is UPF0246 protein LSEI_2080.